The primary structure comprises 206 residues: Urease accessory protein UreG (206 aa).

11 to 18 (GPVGAGKT) contacts GTP.

This sequence belongs to the SIMIBI class G3E GTPase family. UreG subfamily. As to quaternary structure, homodimer. UreD, UreF and UreG form a complex that acts as a GTP-hydrolysis-dependent molecular chaperone, activating the urease apoprotein by helping to assemble the nickel containing metallocenter of UreC. The UreE protein probably delivers the nickel.

It localises to the cytoplasm. Facilitates the functional incorporation of the urease nickel metallocenter. This process requires GTP hydrolysis, probably effectuated by UreG. This chain is Urease accessory protein UreG, found in Ureaplasma parvum serovar 3 (strain ATCC 700970).